The sequence spans 234 residues: t-SNARE protein aex-4 (234 aa).

T-SNARE coiled-coil homology domains are found at residues 37–99 (AKLN…ITAM) and 170–232 (DAIE…VKKL).

It belongs to the SNAP-25 family. As to expression, expressed in intestinal cells.

The protein resides in the cell membrane. T-SNARE protein which regulates the secretion of aex-5 from intestinal cells. Involved in the defecation motor program, which is a coordinated series of three muscle contractions that occurs every 45 seconds. The protein is t-SNARE protein aex-4 of Caenorhabditis elegans.